Here is a 444-residue protein sequence, read N- to C-terminus: ATP-dependent protease ATPase subunit HslU (444 aa).

ATP is bound by residues Ile18, 60 to 65 (GVGKTE), Asp256, Glu322, and Arg394.

Belongs to the ClpX chaperone family. HslU subfamily. As to quaternary structure, a double ring-shaped homohexamer of HslV is capped on each side by a ring-shaped HslU homohexamer. The assembly of the HslU/HslV complex is dependent on binding of ATP.

Its subcellular location is the cytoplasm. In terms of biological role, ATPase subunit of a proteasome-like degradation complex; this subunit has chaperone activity. The binding of ATP and its subsequent hydrolysis by HslU are essential for unfolding of protein substrates subsequently hydrolyzed by HslV. HslU recognizes the N-terminal part of its protein substrates and unfolds these before they are guided to HslV for hydrolysis. This is ATP-dependent protease ATPase subunit HslU from Klebsiella pneumoniae (strain 342).